Reading from the N-terminus, the 116-residue chain is Large ribosomal subunit protein bL19 (116 aa).

The protein belongs to the bacterial ribosomal protein bL19 family.

Functionally, this protein is located at the 30S-50S ribosomal subunit interface and may play a role in the structure and function of the aminoacyl-tRNA binding site. This is Large ribosomal subunit protein bL19 from Pseudomonas entomophila (strain L48).